Reading from the N-terminus, the 117-residue chain is Ig heavy chain V region 5-76 (117 aa).

A signal peptide spans 1–19; it reads MNFVLSLIFLALILKGVQC. Positions 20–49 are framework-1; the sequence is EVHLVESGGGLVKPGGSLKLSCVVSGFTFN. A disulfide bridge links Cys41 with Cys115. The segment at 50–54 is complementarity-determining-1; that stretch reads KYAMS. The framework-2 stretch occupies residues 55-68; that stretch reads WVRQTPEKRLEWVA. A complementarity-determining-2 region spans residues 69–85; that stretch reads TISSGGLYTYYPDSVKG. Positions 86–117 are framework-3; that stretch reads RFTISRDNAGNTLYLQMSSLRSEDTAMYYCAR.

The protein is Ig heavy chain V region 5-76 of Mus musculus (Mouse).